The primary structure comprises 382 residues: Transcription factor MYB104 (382 aa).

HTH myb-type domains are found at residues 13 to 69 (KKTF…KPSL) and 70 to 120 (KKGP…MRLK). DNA-binding regions (H-T-H motif) lie at residues 41–65 (WTHV…MNHL) and 93–116 (WSQM…NARR). The tract at residues 326–364 (IPKTDTSSESQLFQSSLRSHTDATPDIANTTGYVGSNER) is disordered. Polar residues-rich tracts occupy residues 329 to 343 (TDTS…SSLR) and 352 to 364 (IANT…SNER).

It localises to the nucleus. The chain is Transcription factor MYB104 (MYB104) from Arabidopsis thaliana (Mouse-ear cress).